Here is a 181-residue protein sequence, read N- to C-terminus: Ribulose bisphosphate carboxylase small subunit, chloroplastic 2 (181 aa).

The N-terminal 57 residues, 1-57 (MASSVISSAAVATRTNVTQAGSMIAPFTGLKSAATFPVSRKQNLDITSIASNGGRVR), are a transit peptide targeting the chloroplast.

This sequence belongs to the RuBisCO small chain family. In terms of assembly, heterohexadecamer of 8 large and 8 small subunits.

It localises to the plastid. It is found in the chloroplast. Its function is as follows. RuBisCO catalyzes two reactions: the carboxylation of D-ribulose 1,5-bisphosphate, the primary event in carbon dioxide fixation, as well as the oxidative fragmentation of the pentose substrate. Both reactions occur simultaneously and in competition at the same active site. Although the small subunit is not catalytic it is essential for maximal activity. The polypeptide is Ribulose bisphosphate carboxylase small subunit, chloroplastic 2 (Solanum tuberosum (Potato)).